The primary structure comprises 116 residues: Large ribosomal subunit protein uL18 (116 aa).

Belongs to the universal ribosomal protein uL18 family. Part of the 50S ribosomal subunit; part of the 5S rRNA/L5/L18/L25 subcomplex. Contacts the 5S and 23S rRNAs.

In terms of biological role, this is one of the proteins that bind and probably mediate the attachment of the 5S RNA into the large ribosomal subunit, where it forms part of the central protuberance. This chain is Large ribosomal subunit protein uL18, found in Pseudomonas fluorescens (strain ATCC BAA-477 / NRRL B-23932 / Pf-5).